The chain runs to 377 residues: Chaperone protein DnaJ (377 aa).

In terms of domain architecture, J spans 4–69; sequence DYYEALGVER…QKRAAYDRFG (66 aa). The segment at 135–213 adopts a CR-type zinc-finger fold; it reads GKTAQIRVPT…CHGQGRVTQE (79 aa). Zn(2+) contacts are provided by cysteine 148, cysteine 151, cysteine 165, cysteine 168, cysteine 187, cysteine 190, cysteine 201, and cysteine 204. CXXCXGXG motif repeat units follow at residues 148–155, 165–172, 187–194, and 201–208; these read CDECSGSG, CTMCSGSG, CPTCNGRG, and CGKCHGQG.

The protein belongs to the DnaJ family. In terms of assembly, homodimer. Requires Zn(2+) as cofactor.

The protein resides in the cytoplasm. Its function is as follows. Participates actively in the response to hyperosmotic and heat shock by preventing the aggregation of stress-denatured proteins and by disaggregating proteins, also in an autonomous, DnaK-independent fashion. Unfolded proteins bind initially to DnaJ; upon interaction with the DnaJ-bound protein, DnaK hydrolyzes its bound ATP, resulting in the formation of a stable complex. GrpE releases ADP from DnaK; ATP binding to DnaK triggers the release of the substrate protein, thus completing the reaction cycle. Several rounds of ATP-dependent interactions between DnaJ, DnaK and GrpE are required for fully efficient folding. Also involved, together with DnaK and GrpE, in the DNA replication of plasmids through activation of initiation proteins. This Brucella anthropi (strain ATCC 49188 / DSM 6882 / CCUG 24695 / JCM 21032 / LMG 3331 / NBRC 15819 / NCTC 12168 / Alc 37) (Ochrobactrum anthropi) protein is Chaperone protein DnaJ.